Consider the following 494-residue polypeptide: Ketol-acid reductoisomerase (NADP(+)) (494 aa).

The KARI N-terminal Rossmann domain maps to 14 to 208 (LDQLGRCRFM…GGHRAGCLES (195 aa)). Residues 45-48 (CGAQ), arginine 68, arginine 76, serine 78, and 108-110 (DKQ) each bind NADP(+). Histidine 132 is a catalytic residue. Glycine 158 contacts NADP(+). 2 consecutive KARI C-terminal knotted domains span residues 209–344 (SFVA…NYPE) and 345–487 (TDVE…MTDM). Residues aspartate 217, glutamate 221, glutamate 389, and glutamate 393 each contribute to the Mg(2+) site. Serine 414 provides a ligand contact to substrate.

The protein belongs to the ketol-acid reductoisomerase family. Requires Mg(2+) as cofactor.

The catalysed reaction is (2R)-2,3-dihydroxy-3-methylbutanoate + NADP(+) = (2S)-2-acetolactate + NADPH + H(+). It catalyses the reaction (2R,3R)-2,3-dihydroxy-3-methylpentanoate + NADP(+) = (S)-2-ethyl-2-hydroxy-3-oxobutanoate + NADPH + H(+). It functions in the pathway amino-acid biosynthesis; L-isoleucine biosynthesis; L-isoleucine from 2-oxobutanoate: step 2/4. The protein operates within amino-acid biosynthesis; L-valine biosynthesis; L-valine from pyruvate: step 2/4. In terms of biological role, involved in the biosynthesis of branched-chain amino acids (BCAA). Catalyzes an alkyl-migration followed by a ketol-acid reduction of (S)-2-acetolactate (S2AL) to yield (R)-2,3-dihydroxy-isovalerate. In the isomerase reaction, S2AL is rearranged via a Mg-dependent methyl migration to produce 3-hydroxy-3-methyl-2-ketobutyrate (HMKB). In the reductase reaction, this 2-ketoacid undergoes a metal-dependent reduction by NADPH to yield (R)-2,3-dihydroxy-isovalerate. The protein is Ketol-acid reductoisomerase (NADP(+)) of Vibrio parahaemolyticus serotype O3:K6 (strain RIMD 2210633).